The chain runs to 506 residues: Anaerobic nitric oxide reductase transcription regulator NorR (506 aa).

At Asp-57 the chain carries 4-aspartylphosphate. The region spanning 187 to 416 (MIGLSPAMTQ…LEHAIHRAVV (230 aa)) is the Sigma-54 factor interaction domain. Residues 215–222 (GETGTGKE) and 278–287 (ADNGTLFLDE) contribute to the ATP site. A DNA-binding region (H-T-H motif) is located at residues 481-500 (WAASARALETDVANLHRLAK).

Its pathway is nitrogen metabolism; nitric oxide reduction. Its function is as follows. Required for the expression of anaerobic nitric oxide (NO) reductase, acts as a transcriptional activator for at least the norVW operon. Activation also requires sigma-54. The polypeptide is Anaerobic nitric oxide reductase transcription regulator NorR (Salmonella heidelberg (strain SL476)).